We begin with the raw amino-acid sequence, 358 residues long: tRNA-specific 2-thiouridylase MnmA (358 aa).

Residues 6–13 (AMSGGVDS) and L32 contribute to the ATP site. The Nucleophile role is filled by C101. C101 and C193 form a disulfide bridge. Residue G125 participates in ATP binding. The tract at residues 143–145 (KDQ) is interaction with tRNA. Catalysis depends on C193, which acts as the Cysteine persulfide intermediate.

This sequence belongs to the MnmA/TRMU family.

Its subcellular location is the cytoplasm. The catalysed reaction is S-sulfanyl-L-cysteinyl-[protein] + uridine(34) in tRNA + AH2 + ATP = 2-thiouridine(34) in tRNA + L-cysteinyl-[protein] + A + AMP + diphosphate + H(+). Its function is as follows. Catalyzes the 2-thiolation of uridine at the wobble position (U34) of tRNA, leading to the formation of s(2)U34. This Mycobacterium avium (strain 104) protein is tRNA-specific 2-thiouridylase MnmA.